An 886-amino-acid chain; its full sequence is CRM-domain containing factor CFM3, chloroplastic/mitochondrial (886 aa).

The N-terminal 70 residues, 1-70, are a transit peptide targeting the chloroplast and mitochondrion; it reads MAAAAMAISP…LDLRPEPSPS (70 aa). Disordered regions lie at residues 56-84 and 269-291; these read RPAS…TSRS and TKGT…PPGH. 3 consecutive CRM domains span residues 174–270, 378–475, and 590–690; these read LTLP…EPTK, PSLS…ELAE, and ETIT…SKLR. Polar residues predominate over residues 270 to 281; that stretch reads KGTSKNTQTLGM. The disordered stretch occupies residues 771-886; the sequence is SFDNSVAVQN…QSTELTNTCS (116 aa). The segment covering 793-827 has biased composition (acidic residues); the sequence is NSDDEGDYSDEDDDEDDDNDEEDGFDYENDDEDDV. 2 stretches are compositionally biased toward polar residues: residues 841–852 and 869–886; these read DFGSSDSENYVS and DSRN…NTCS.

Interacts with RNA. Part of large ribonucleo-protein particles that contain CAF1 and/or CAF2, and RNC1.

The protein localises to the plastid. It is found in the chloroplast. It localises to the mitochondrion. Binds specific group II introns in chloroplasts and facilitates their splicing. Acts on subgroup IIB introns. The substrates of the subgroup IIB also require the CRM domain proteins CAF1 or CAF2, with a simultaneous binding of CFM3 and CAF1 or CAF2. May influence the biogenesis of the mitochondrial small ribosomal subunit. This is CRM-domain containing factor CFM3, chloroplastic/mitochondrial from Oryza sativa subsp. japonica (Rice).